Reading from the N-terminus, the 95-residue chain is Aspartyl/glutamyl-tRNA(Asn/Gln) amidotransferase subunit C (95 aa).

It belongs to the GatC family. In terms of assembly, heterotrimer of A, B and C subunits.

The catalysed reaction is L-glutamyl-tRNA(Gln) + L-glutamine + ATP + H2O = L-glutaminyl-tRNA(Gln) + L-glutamate + ADP + phosphate + H(+). It catalyses the reaction L-aspartyl-tRNA(Asn) + L-glutamine + ATP + H2O = L-asparaginyl-tRNA(Asn) + L-glutamate + ADP + phosphate + 2 H(+). Functionally, allows the formation of correctly charged Asn-tRNA(Asn) or Gln-tRNA(Gln) through the transamidation of misacylated Asp-tRNA(Asn) or Glu-tRNA(Gln) in organisms which lack either or both of asparaginyl-tRNA or glutaminyl-tRNA synthetases. The reaction takes place in the presence of glutamine and ATP through an activated phospho-Asp-tRNA(Asn) or phospho-Glu-tRNA(Gln). The polypeptide is Aspartyl/glutamyl-tRNA(Asn/Gln) amidotransferase subunit C (Geobacter sulfurreducens (strain ATCC 51573 / DSM 12127 / PCA)).